We begin with the raw amino-acid sequence, 124 residues long: Small ribosomal subunit protein bS6 (124 aa).

Positions 96-124 are disordered; sequence ETAPSPMMKEVQREEARKAAQTTTEGQAA. Over residues 115 to 124 the composition is skewed to polar residues; sequence AQTTTEGQAA.

This sequence belongs to the bacterial ribosomal protein bS6 family.

In terms of biological role, binds together with bS18 to 16S ribosomal RNA. The polypeptide is Small ribosomal subunit protein bS6 (Cupriavidus necator (strain ATCC 17699 / DSM 428 / KCTC 22496 / NCIMB 10442 / H16 / Stanier 337) (Ralstonia eutropha)).